The chain runs to 714 residues: Hormonally up-regulated neu tumor-associated kinase (714 aa).

The span at 1–15 (MPAAAGDGLLGEPAA) shows a compositional bias: low complexity. Residues 1–26 (MPAAAGDGLLGEPAAPGGGGGAEDAA) form a disordered region. The region spanning 62–320 (LIGSRKLGEG…IQQALANRWL (259 aa)) is the Protein kinase domain. ATP-binding positions include 68–76 (LGEGSFAKV) and Lys-91. Catalysis depends on Asp-186, which acts as the Proton acceptor. The span at 437–461 (KKPKEQEKRGDFLHRPFSKKLDKNL) shows a compositional bias: basic and acidic residues. 3 disordered regions span residues 437–471 (KKPK…SGSL), 518–552 (MEFI…HKED), and 590–615 (ARRN…HTPL). A compositionally biased stretch (low complexity) spans 599-611 (LSPGLPSGSMSPL).

This sequence belongs to the protein kinase superfamily. CAMK Ser/Thr protein kinase family. SNF1 subfamily.

The catalysed reaction is L-seryl-[protein] + ATP = O-phospho-L-seryl-[protein] + ADP + H(+). It catalyses the reaction L-threonyl-[protein] + ATP = O-phospho-L-threonyl-[protein] + ADP + H(+). In Homo sapiens (Human), this protein is Hormonally up-regulated neu tumor-associated kinase (HUNK).